The chain runs to 524 residues: Cytochrome P450 monooxygenase drtD (524 aa).

A helical membrane pass occupies residues 2-22 (SDTYLVAASGLAVCFFVLYLL). Position 418 (C418) interacts with heme.

This sequence belongs to the cytochrome P450 family. Requires heme as cofactor.

The protein localises to the membrane. It participates in secondary metabolite biosynthesis; terpenoid biosynthesis. Functionally, cytochrome P450 monooxygenase; part of the gene cluster that mediates the biosynthesis of various drimane-type sesquiterpene esters, compounds that exhibit diverse biological activities and are widely present in eukaryotes. The pathway begins with the synthesis of the backbone drimenol by the terpene cyclase drtB using farnesyl pyrophosphate (FPP) as substrate. The cytochrome P450 monooxygenase drtD is then responsible for the hydroxylations at C-6, C-9 and C-12, as well as the oxidation of hydroxyl groups at C-6 and C-11 to a ketone and an aldehyde, respectively. Then, the biosynthesis can go in two directions, either the hydroxylated drimenol is further hydroxylated at C-2 and C-3 by an enzyme(s) not associated with the drt cluster, or the FAD-binding oxidoreductase drtC further oxidizes C-11 or C-12 to form the butyrolactone ring. DrtB, drtD and drtC are solely responsible for the formation of the different drimane structures observed during drimane sesquiterpenes biosynthesis. The polyketide synthase drtA synthesizes different lengths (C6 and C8) of PKS chains, which are then oxidized to varying degrees by the short-chain dehydrogenase drtF. Finally, these PKS chains are transferred onto drimane sesquiterpenes by the acyltransferase drtE, forming the sesquiterpene esters. In addition to the different fatty acyl-CoA chains produced by drtA, drtE is also able to use cinnamoyl-CoA as a substrate. The polypeptide is Cytochrome P450 monooxygenase drtD (Aspergillus calidoustus).